The primary structure comprises 121 residues: Small ribosomal subunit protein uS13 (121 aa).

A disordered region spans residues Arg-94 to Arg-121. Over residues Ala-107–Arg-121 the composition is skewed to basic residues.

This sequence belongs to the universal ribosomal protein uS13 family. As to quaternary structure, part of the 30S ribosomal subunit. Forms a loose heterodimer with protein S19. Forms two bridges to the 50S subunit in the 70S ribosome.

Its function is as follows. Located at the top of the head of the 30S subunit, it contacts several helices of the 16S rRNA. In the 70S ribosome it contacts the 23S rRNA (bridge B1a) and protein L5 of the 50S subunit (bridge B1b), connecting the 2 subunits; these bridges are implicated in subunit movement. Contacts the tRNAs in the A and P-sites. This Natranaerobius thermophilus (strain ATCC BAA-1301 / DSM 18059 / JW/NM-WN-LF) protein is Small ribosomal subunit protein uS13.